Here is a 209-residue protein sequence, read N- to C-terminus: ATP-dependent Clp protease proteolytic subunit (209 aa).

Serine 113 (nucleophile) is an active-site residue. Residue histidine 138 is part of the active site.

Belongs to the peptidase S14 family. In terms of assembly, fourteen ClpP subunits assemble into 2 heptameric rings which stack back to back to give a disk-like structure with a central cavity, resembling the structure of eukaryotic proteasomes.

Its subcellular location is the cytoplasm. It catalyses the reaction Hydrolysis of proteins to small peptides in the presence of ATP and magnesium. alpha-casein is the usual test substrate. In the absence of ATP, only oligopeptides shorter than five residues are hydrolyzed (such as succinyl-Leu-Tyr-|-NHMec, and Leu-Tyr-Leu-|-Tyr-Trp, in which cleavage of the -Tyr-|-Leu- and -Tyr-|-Trp bonds also occurs).. Functionally, cleaves peptides in various proteins in a process that requires ATP hydrolysis. Has a chymotrypsin-like activity. Plays a major role in the degradation of misfolded proteins. This chain is ATP-dependent Clp protease proteolytic subunit, found in Blochmanniella floridana.